Reading from the N-terminus, the 173-residue chain is Alpha-crystallin A chain (173 aa).

M1 carries the N-acetylmethionine modification. Residues 1-63 (MDIAIQHPWF…RSVLDSGISE (63 aa)) form a required for complex formation with BFSP1 and BFSP2 region. A Deamidated glutamine; partial modification is found at Q6. Phosphoserine is present on S45. Q50 is subject to Deamidated glutamine; partial. Positions 52–162 (LFRSVLDSGI…GHSERAIPVS (111 aa)) constitute a sHSP domain. An N6-acetyllysine modification is found at K70. Q90 is modified (deamidated glutamine; partial). Residue K99 is modified to N6-acetyllysine. Residue H100 coordinates Zn(2+). N101 is modified (deamidated asparagine; partial). The Zn(2+) site is built by E102 and H107. S122 carries the post-translational modification Phosphoserine. Residue N123 is modified to Deamidated asparagine; partial. The segment at 144-173 (PKVTSGMDAGHSERAIPVSREEKPSSAPSS) is disordered. Basic and acidic residues predominate over residues 153 to 167 (GHSERAIPVSREEKP). Zn(2+) is bound at residue H154. S162 carries an O-linked (GlcNAc) serine glycan.

Belongs to the small heat shock protein (HSP20) family. As to quaternary structure, heteromer composed of three CRYAA and one CRYAB subunits. Inter-subunit bridging via zinc ions enhances stability, which is crucial as there is no protein turn over in the lens. Can also form homodimers and homotetramers (dimers of dimers) which serve as the building blocks of homooligomers. Within homooligomers, the zinc-binding motif is created from residues of 3 different molecules. His-100 and Glu-102 from one molecule are ligands of the zinc ion, and His-107 and His-154 residues from additional molecules complete the site with tetrahedral coordination geometry. Part of a complex required for lens intermediate filament formation composed of BFSP1, BFSP2 and CRYAA. Post-translationally, acetylation at Lys-70 may increase chaperone activity. Undergoes age-dependent proteolytical cleavage at the C-terminus.

The protein localises to the cytoplasm. The protein resides in the nucleus. Contributes to the transparency and refractive index of the lens. Acts as a chaperone, preventing aggregation of various proteins under a wide range of stress conditions. Required for the correct formation of lens intermediate filaments as part of a complex composed of BFSP1, BFSP2 and CRYAA. The chain is Alpha-crystallin A chain (CRYAA) from Phocoena phocoena (Harbor porpoise).